The primary structure comprises 409 residues: MSESEIPGQVVVDLEADQSAEGGRRMVLNMGPQHPSTHGVLRLLMELDGENIMKCVPDIGFLHTGIEKEFEEKFYQQAVTLTDRVDYLAPLSNNLGWCLAVEKLLQLEIPPQAQWMRVMLTELTRLNSHLVWLGTHALDIGAMSVFLYCFREREEILKIFELFSGQRMMTSYFRIGGLALEPPRGWQQRVKKFLDVFPSRIDEYENLLTNNRIWTGRTKGIGFISLEDMLDLGITGPMLRAAGLKIDARKDAPYSSYEKFDFEVPTSTDNDVFARYQVRVEEMRQSTKIVRQAMEGMPAGAWKADAPHVVLPDREKMKTQMEALIFHFKIVTEGFRVPEGEVYQVIESPRGELGYYVVSDGTTKPYRVHMRTPSFGNLQAVPKMVEGSLIADVIASIGSMDFVLGDTDR.

It belongs to the complex I 49 kDa subunit family. As to quaternary structure, NDH-1 is composed of 14 different subunits. Subunits NuoB, C, D, E, F, and G constitute the peripheral sector of the complex.

It is found in the cell inner membrane. The catalysed reaction is a quinone + NADH + 5 H(+)(in) = a quinol + NAD(+) + 4 H(+)(out). NDH-1 shuttles electrons from NADH, via FMN and iron-sulfur (Fe-S) centers, to quinones in the respiratory chain. The immediate electron acceptor for the enzyme in this species is believed to be ubiquinone. Couples the redox reaction to proton translocation (for every two electrons transferred, four hydrogen ions are translocated across the cytoplasmic membrane), and thus conserves the redox energy in a proton gradient. The chain is NADH-quinone oxidoreductase subunit D 1 from Solibacter usitatus (strain Ellin6076).